The chain runs to 285 residues: Small ribosomal subunit protein uS2 (285 aa).

The tract at residues 228–285 (RAGLSADKDAKPEAGAGEPLAEWEQELLSQAAPAAEAEAAPAAEAEAAPAAEAPATEA) is disordered. Over residues 258 to 285 (AAPAAEAEAAPAAEAEAAPAAEAPATEA) the composition is skewed to low complexity.

This sequence belongs to the universal ribosomal protein uS2 family.

The polypeptide is Small ribosomal subunit protein uS2 (Rhodococcus erythropolis (strain PR4 / NBRC 100887)).